We begin with the raw amino-acid sequence, 292 residues long: Acetyl-coenzyme A carboxylase carboxyl transferase subunit beta (292 aa).

A CoA carboxyltransferase N-terminal domain is found at 29–292 (LWSKCPECGQ…HGCLQGSAAV (264 aa)). Zn(2+) is bound by residues C33, C36, C52, and C55. The segment at 33 to 55 (CPECGQVVYRKDLLANASVCSNC) adopts a C4-type zinc-finger fold.

The protein belongs to the AccD/PCCB family. In terms of assembly, acetyl-CoA carboxylase is a heterohexamer composed of biotin carboxyl carrier protein (AccB), biotin carboxylase (AccC) and two subunits each of ACCase subunit alpha (AccA) and ACCase subunit beta (AccD). Requires Zn(2+) as cofactor.

Its subcellular location is the cytoplasm. It catalyses the reaction N(6)-carboxybiotinyl-L-lysyl-[protein] + acetyl-CoA = N(6)-biotinyl-L-lysyl-[protein] + malonyl-CoA. Its pathway is lipid metabolism; malonyl-CoA biosynthesis; malonyl-CoA from acetyl-CoA: step 1/1. In terms of biological role, component of the acetyl coenzyme A carboxylase (ACC) complex. Biotin carboxylase (BC) catalyzes the carboxylation of biotin on its carrier protein (BCCP) and then the CO(2) group is transferred by the transcarboxylase to acetyl-CoA to form malonyl-CoA. In Synechococcus sp. (strain WH7803), this protein is Acetyl-coenzyme A carboxylase carboxyl transferase subunit beta.